We begin with the raw amino-acid sequence, 182 residues long: UPF0254 protein MK0012 (182 aa).

The protein belongs to the UPF0254 family.

The chain is UPF0254 protein MK0012 from Methanopyrus kandleri (strain AV19 / DSM 6324 / JCM 9639 / NBRC 100938).